A 215-amino-acid polypeptide reads, in one-letter code: Ribonuclease T (215 aa).

In terms of domain architecture, Exonuclease spans valine 20–phenylalanine 194. Mg(2+) contacts are provided by aspartate 23, glutamate 25, histidine 181, and aspartate 186. Histidine 181 acts as the Proton donor/acceptor in catalysis.

The protein belongs to the RNase T family. In terms of assembly, homodimer. It depends on Mg(2+) as a cofactor.

Trims short 3' overhangs of a variety of RNA species, leaving a one or two nucleotide 3' overhang. Responsible for the end-turnover of tRNA: specifically removes the terminal AMP residue from uncharged tRNA (tRNA-C-C-A). Also appears to be involved in tRNA biosynthesis. The chain is Ribonuclease T from Yersinia pestis.